Here is a 411-residue protein sequence, read N- to C-terminus: Squalene synthase (411 aa).

The next 2 helical transmembrane spans lie at 281-301 (SIFRFCAIPQVMAIGTLAMCY) and 388-408 (SPVLIVVIFIILAIILAQLSG).

This sequence belongs to the phytoene/squalene synthase family. Requires Mg(2+) as cofactor.

It is found in the endoplasmic reticulum membrane. It catalyses the reaction 2 (2E,6E)-farnesyl diphosphate + NADPH + H(+) = squalene + 2 diphosphate + NADP(+). It carries out the reaction 2 (2E,6E)-farnesyl diphosphate + NADH + H(+) = squalene + 2 diphosphate + NAD(+). Its pathway is terpene metabolism; lanosterol biosynthesis; lanosterol from farnesyl diphosphate: step 1/3. This chain is Squalene synthase, found in Nicotiana benthamiana.